The primary structure comprises 265 residues: uncharacterized protein (265 aa).

2 disordered regions span residues 21 to 53 and 78 to 133; these read TLTHDEQGPGVEPGPCSRGSSIDGLLPSLLGPH and HAPS…SSVS. The segment covering 90–101 has biased composition (acidic residues); sequence DDDDDDEDDDDS. Positions 114–123 are enriched in low complexity; that stretch reads SSSSSSSPRV. 137-144 contacts ATP; the sequence is AILHQGKS.

This is an uncharacterized protein from Saccharomyces cerevisiae (strain ATCC 204508 / S288c) (Baker's yeast).